Here is a 227-residue protein sequence, read N- to C-terminus: uncharacterized protein (227 aa).

The N-terminal stretch at 1–25 (MLIMKKLLLIAATSATMLSSSVSFA) is a signal peptide.

To R.conorii RC1281.

This is an uncharacterized protein from Rickettsia conorii (strain ATCC VR-613 / Malish 7).